A 466-amino-acid chain; its full sequence is Cysteine--tRNA ligase (466 aa).

C28 lines the Zn(2+) pocket. Positions 30 to 40 (PTVYNYIHIGN) match the 'HIGH' region motif. Residues C208, H233, and E237 each coordinate Zn(2+). A 'KMSKS' region motif is present at residues 265–269 (KMSKS). K268 lines the ATP pocket.

This sequence belongs to the class-I aminoacyl-tRNA synthetase family. As to quaternary structure, monomer. It depends on Zn(2+) as a cofactor.

The protein resides in the cytoplasm. It carries out the reaction tRNA(Cys) + L-cysteine + ATP = L-cysteinyl-tRNA(Cys) + AMP + diphosphate. The protein is Cysteine--tRNA ligase of Staphylococcus aureus (strain MSSA476).